A 652-amino-acid polypeptide reads, in one-letter code: NAD(P)H-quinone oxidoreductase subunit 5, chloroplastic (652 aa).

The next 16 helical transmembrane spans lie at 9-29 (WLIP…LISF), 40-60 (YSFL…LILF), 91-111 (PLTA…LIYT), 124-144 (FFAY…SPNL), 147-167 (IYVF…FWFT), 188-208 (GLLL…FDVI), 225-245 (LAIF…AQFP), 258-278 (TPIS…FLVA), 289-309 (FLMD…ATIA), 327-347 (LGYM…FHLM), 354-374 (ALLF…VGFN), 395-415 (GNAF…ACFW), 424-444 (AFVH…LTSF), 482-502 (TLPL…GTPF), 526-546 (LFIA…AYLI), and 630-650 (ILMI…YYSL).

Belongs to the complex I subunit 5 family. In terms of assembly, NDH is composed of at least 16 different subunits, 5 of which are encoded in the nucleus.

The protein resides in the plastid. It localises to the chloroplast thylakoid membrane. The catalysed reaction is a plastoquinone + NADH + (n+1) H(+)(in) = a plastoquinol + NAD(+) + n H(+)(out). The enzyme catalyses a plastoquinone + NADPH + (n+1) H(+)(in) = a plastoquinol + NADP(+) + n H(+)(out). Functionally, NDH shuttles electrons from NAD(P)H:plastoquinone, via FMN and iron-sulfur (Fe-S) centers, to quinones in the photosynthetic chain and possibly in a chloroplast respiratory chain. The immediate electron acceptor for the enzyme in this species is believed to be plastoquinone. Couples the redox reaction to proton translocation, and thus conserves the redox energy in a proton gradient. The sequence is that of NAD(P)H-quinone oxidoreductase subunit 5, chloroplastic (ndhF) from Mesostigma viride (Green alga).